The following is a 440-amino-acid chain: Cobyrinate a,c-diamide synthase (440 aa).

The GATase cobBQ-type domain occupies 247–428 (RIAIAYDAAF…MHLYFPSNPR (182 aa)). Cysteine 329 serves as the catalytic Nucleophile.

This sequence belongs to the CobB/CbiA family. Mg(2+) is required as a cofactor.

It catalyses the reaction cob(II)yrinate + 2 L-glutamine + 2 ATP + 2 H2O = cob(II)yrinate a,c diamide + 2 L-glutamate + 2 ADP + 2 phosphate + 2 H(+). It participates in cofactor biosynthesis; adenosylcobalamin biosynthesis; cob(II)yrinate a,c-diamide from sirohydrochlorin (anaerobic route): step 10/10. In terms of biological role, catalyzes the ATP-dependent amidation of the two carboxylate groups at positions a and c of cobyrinate, using either L-glutamine or ammonia as the nitrogen source. The protein is Cobyrinate a,c-diamide synthase of Picrophilus torridus (strain ATCC 700027 / DSM 9790 / JCM 10055 / NBRC 100828 / KAW 2/3).